The chain runs to 182 residues: ATP synthase subunit delta (182 aa).

This sequence belongs to the ATPase delta chain family. As to quaternary structure, F-type ATPases have 2 components, F(1) - the catalytic core - and F(0) - the membrane proton channel. F(1) has five subunits: alpha(3), beta(3), gamma(1), delta(1), epsilon(1). CF(0) has four main subunits: a(1), b(1), b'(1) and c(10-14). The alpha and beta chains form an alternating ring which encloses part of the gamma chain. F(1) is attached to F(0) by a central stalk formed by the gamma and epsilon chains, while a peripheral stalk is formed by the delta, b and b' chains.

It localises to the cellular thylakoid membrane. Functionally, f(1)F(0) ATP synthase produces ATP from ADP in the presence of a proton or sodium gradient. F-type ATPases consist of two structural domains, F(1) containing the extramembraneous catalytic core and F(0) containing the membrane proton channel, linked together by a central stalk and a peripheral stalk. During catalysis, ATP synthesis in the catalytic domain of F(1) is coupled via a rotary mechanism of the central stalk subunits to proton translocation. This protein is part of the stalk that links CF(0) to CF(1). It either transmits conformational changes from CF(0) to CF(1) or is implicated in proton conduction. The polypeptide is ATP synthase subunit delta (Synechococcus sp. (strain WH7803)).